Consider the following 160-residue polypeptide: Deoxyuridine 5'-triphosphate nucleotidohydrolase (160 aa).

Residues 79-81 (RSG), asparagine 92, 96-98 (TVD), and lysine 106 each bind substrate.

It belongs to the dUTPase family. Mg(2+) serves as cofactor.

It carries out the reaction dUTP + H2O = dUMP + diphosphate + H(+). It participates in pyrimidine metabolism; dUMP biosynthesis; dUMP from dCTP (dUTP route): step 2/2. Its function is as follows. This enzyme is involved in nucleotide metabolism: it produces dUMP, the immediate precursor of thymidine nucleotides and it decreases the intracellular concentration of dUTP so that uracil cannot be incorporated into DNA. This is Deoxyuridine 5'-triphosphate nucleotidohydrolase from Rhizobium meliloti (strain 1021) (Ensifer meliloti).